A 286-amino-acid polypeptide reads, in one-letter code: 4-diphosphocytidyl-2-C-methyl-D-erythritol kinase (286 aa).

Lysine 8 is a catalytic residue. Residue 92–102 (PVSAGLAGGST) coordinates ATP. The active site involves aspartate 134.

It belongs to the GHMP kinase family. IspE subfamily.

The catalysed reaction is 4-CDP-2-C-methyl-D-erythritol + ATP = 4-CDP-2-C-methyl-D-erythritol 2-phosphate + ADP + H(+). It functions in the pathway isoprenoid biosynthesis; isopentenyl diphosphate biosynthesis via DXP pathway; isopentenyl diphosphate from 1-deoxy-D-xylulose 5-phosphate: step 3/6. Its function is as follows. Catalyzes the phosphorylation of the position 2 hydroxy group of 4-diphosphocytidyl-2C-methyl-D-erythritol. The protein is 4-diphosphocytidyl-2-C-methyl-D-erythritol kinase of Caldicellulosiruptor bescii (strain ATCC BAA-1888 / DSM 6725 / KCTC 15123 / Z-1320) (Anaerocellum thermophilum).